The sequence spans 456 residues: Shufflon protein D' (456 aa).

The constant region stretch occupies residues 1 to 361; sequence MKKYDRGWAS…TGAILSCQSG (361 aa). Residues 362–456 are variable region; that stretch reads TWRKSNSGST…KCSYVVACQN (95 aa).

In Escherichia coli, this protein is Shufflon protein D'.